A 70-amino-acid polypeptide reads, in one-letter code: MLNPSIDSLLKKIDSKYTLVTVAAKRAREMQLADDCAVEKPVSHKFVGKALEEIDAELLNYVPSEEKVSE.

Belongs to the RNA polymerase subunit omega family. In terms of assembly, the RNAP catalytic core consists of 2 alpha, 1 beta, 1 beta' and 1 omega subunit. When a sigma factor is associated with the core the holoenzyme is formed, which can initiate transcription.

The catalysed reaction is RNA(n) + a ribonucleoside 5'-triphosphate = RNA(n+1) + diphosphate. Its function is as follows. Promotes RNA polymerase assembly. Latches the N- and C-terminal regions of the beta' subunit thereby facilitating its interaction with the beta and alpha subunits. This is DNA-directed RNA polymerase subunit omega from Bacillus cytotoxicus (strain DSM 22905 / CIP 110041 / 391-98 / NVH 391-98).